The chain runs to 441 residues: Monodehydroascorbate reductase 3 (441 aa).

Residues 14-17 (GGVA), Glu-41, Arg-48, Lys-53, Ile-96, and 147-148 (RE) each bind FAD. NAD(+)-binding positions include 173–179 (GGFLGLE), Glu-197, Arg-203, and Gly-262. 175-179 (FLGLE) is a binding site for NADP(+). Arg-203 and Gly-262 together coordinate NADP(+). FAD is bound at residue Asp-299. 315–316 (EH) is a binding site for NAD(+). Residue 315–316 (EH) coordinates NADP(+). Arg-321 is a binding site for L-ascorbate. Residue Tyr-350 participates in FAD binding. NAD(+) is bound at residue Tyr-350. Tyr-350 is an NADP(+) binding site. L-ascorbate is bound at residue Arg-352. A Phosphoserine modification is found at Ser-418.

It belongs to the FAD-dependent oxidoreductase family. FAD is required as a cofactor.

It is found in the cytoplasm. It catalyses the reaction 2 monodehydro-L-ascorbate radical + NADH + H(+) = 2 L-ascorbate + NAD(+). Catalyzes the conversion of monodehydroascorbate to ascorbate, oxidizing NADH in the process. Required for producing sufficient ascorbate to maintain the interaction between Piriformospora indica and Arabidopsis in a mutualistic state. The chain is Monodehydroascorbate reductase 3 from Arabidopsis thaliana (Mouse-ear cress).